We begin with the raw amino-acid sequence, 755 residues long: Dolichyl-phosphate-mannose--protein mannosyltransferase 4 (755 aa).

Positions 1 to 23 are disordered; that stretch reads MSQTLKKRGGNSSGRKSPTTSNI. An N-linked (GlcNAc...) asparagine glycan is attached at Asn11. Positions 13–23 are enriched in polar residues; that stretch reads SGRKSPTTSNI. 6 consecutive transmembrane segments (helical) span residues 92 to 112, 147 to 167, 185 to 205, 212 to 232, 237 to 257, and 278 to 298; these read FFDL…WLIG, IVPI…ACLF, ILLD…YSKF, SFSS…SCVI, VGVF…WILL, and ALII…FAIL. MIR domains lie at 325–389, 396–454, and 466–523; these read SKPV…IVPT, GTKV…LRLH, and KKEI…FDLI. An N-linked (GlcNAc...) asparagine glycan is attached at Asn445. Transmembrane regions (helical) follow at residues 595-615, 640-660, and 670-690; these read IFFI…SIYI, LYNT…PFFL, and YLPA…FICS. The N-linked (GlcNAc...) asparagine glycan is linked to Asn691. The helical transmembrane segment at 706-726 threads the bilayer; sequence YKIIAVVAACSTAIIWFFFYF.

Belongs to the glycosyltransferase 39 family. Forms a functional homodimer.

The protein localises to the endoplasmic reticulum membrane. It catalyses the reaction a di-trans,poly-cis-dolichyl beta-D-mannosyl phosphate + L-seryl-[protein] = 3-O-(alpha-D-mannosyl)-L-seryl-[protein] + a di-trans,poly-cis-dolichyl phosphate + H(+). The catalysed reaction is a di-trans,poly-cis-dolichyl beta-D-mannosyl phosphate + L-threonyl-[protein] = 3-O-(alpha-D-mannosyl)-L-threonyl-[protein] + a di-trans,poly-cis-dolichyl phosphate + H(+). The protein operates within protein modification; protein glycosylation. Protein mannosyltransferase (PMT) involved in hyphal growth and drug sensitivity. Transfers mannose from Dol-P-mannose to Ser or Thr residues on proteins. PMT1, PMT2 and PMT4 account for most of the protein-O-glycosylation activity, while PMT5 and PMT6 may specifically modulate a much narrower spectrum of target proteins. Accounts for the O-glycosylation of AXL2, responsible for bud site selection, as well as of the SEC20 t-SNARE component. O-glycosylation of SEC20 is essential for its stability. Required for biofilm formation. This Candida albicans (strain SC5314 / ATCC MYA-2876) (Yeast) protein is Dolichyl-phosphate-mannose--protein mannosyltransferase 4.